A 295-amino-acid chain; its full sequence is Small ribosomal subunit biogenesis GTPase RsgA (295 aa).

Positions 68 to 228 (KNLLTKPHVA…VVDTPGFANL (161 aa)) constitute a CP-type G domain. Residues 117 to 120 (NKMD) and 170 to 178 (GLSGVGKSS) contribute to the GTP site. Zn(2+)-binding residues include Cys-250, Cys-255, His-257, and Cys-263.

The protein belongs to the TRAFAC class YlqF/YawG GTPase family. RsgA subfamily. As to quaternary structure, monomer. Associates with 30S ribosomal subunit, binds 16S rRNA. The cofactor is Zn(2+).

It is found in the cytoplasm. One of several proteins that assist in the late maturation steps of the functional core of the 30S ribosomal subunit. Helps release RbfA from mature subunits. May play a role in the assembly of ribosomal proteins into the subunit. Circularly permuted GTPase that catalyzes slow GTP hydrolysis, GTPase activity is stimulated by the 30S ribosomal subunit. The protein is Small ribosomal subunit biogenesis GTPase RsgA of Thermotoga petrophila (strain ATCC BAA-488 / DSM 13995 / JCM 10881 / RKU-1).